The sequence spans 529 residues: Inosine-5'-monophosphate dehydrogenase (529 aa).

CBS domains are found at residues 129-185 and 189-246; these read MVTD…SKQV and MTKA…PLAT. Residues Asp283 and 334–336 each bind NAD(+); that span reads GVG. 2 residues coordinate K(+): Gly336 and Gly338. An IMP-binding site is contributed by Ser339. Residue Cys341 coordinates K(+). The active-site Thioimidate intermediate is the Cys341. IMP-binding positions include 374 to 376, 397 to 398, and 421 to 425; these read DGG, GS, and YRGMG. The active-site Proton acceptor is the Arg443. IMP is bound at residue Glu458. The K(+) site is built by Glu511, Ser512, and His513.

It belongs to the IMPDH/GMPR family. In terms of assembly, homotetramer. It depends on K(+) as a cofactor.

The enzyme catalyses IMP + NAD(+) + H2O = XMP + NADH + H(+). The protein operates within purine metabolism; XMP biosynthesis via de novo pathway; XMP from IMP: step 1/1. Mycophenolic acid (MPA) is a non-competitive inhibitor that prevents formation of the closed enzyme conformation by binding to the same site as the amobile flap. In contrast, mizoribine monophosphate (MZP) is a competitive inhibitor that induces the closed conformation. MPA is a potent inhibitor of mammalian IMPDHs but a poor inhibitor of the bacterial enzymes. MZP is a more potent inhibitor of bacterial IMPDH. Functionally, catalyzes the conversion of inosine 5'-phosphate (IMP) to xanthosine 5'-phosphate (XMP), the first committed and rate-limiting step in the de novo synthesis of guanine nucleotides, and therefore plays an important role in the regulation of cell growth. The sequence is that of Inosine-5'-monophosphate dehydrogenase from Mycobacterium bovis (strain ATCC BAA-935 / AF2122/97).